A 77-amino-acid chain; its full sequence is Acyl carrier protein (77 aa).

One can recognise a Carrier domain in the interval 4–77 (SETFEKVKKI…TVQAAVDXIN (74 aa)). Ser40 is modified (O-(pantetheine 4'-phosphoryl)serine).

This sequence belongs to the acyl carrier protein (ACP) family. 4'-phosphopantetheine is transferred from CoA to a specific serine of apo-ACP by AcpS. This modification is essential for activity because fatty acids are bound in thioester linkage to the sulfhydryl of the prosthetic group.

It localises to the cytoplasm. The protein operates within lipid metabolism; fatty acid biosynthesis. Functionally, carrier of the growing fatty acid chain in fatty acid biosynthesis. This chain is Acyl carrier protein, found in Anabaena variabilis.